A 125-amino-acid chain; its full sequence is Small ribosomal subunit protein eS8 (125 aa).

Residues 1–20 (MLWQGESIRKVTGGRRRPAQ) form a disordered region.

It belongs to the eukaryotic ribosomal protein eS8 family. In terms of assembly, part of the 30S ribosomal subunit.

The sequence is that of Small ribosomal subunit protein eS8 from Methanoregula boonei (strain DSM 21154 / JCM 14090 / 6A8).